A 550-amino-acid polypeptide reads, in one-letter code: Glucose-6-phosphate isomerase 2 (550 aa).

Glu357 functions as the Proton donor in the catalytic mechanism. Residues His388 and Lys514 contribute to the active site. The interval 527-550 is disordered; that stretch reads DTGALGHDSSTNGLIRHYRERHGK.

This sequence belongs to the GPI family.

Its subcellular location is the cytoplasm. It carries out the reaction alpha-D-glucose 6-phosphate = beta-D-fructose 6-phosphate. Its pathway is carbohydrate biosynthesis; gluconeogenesis. It functions in the pathway carbohydrate degradation; glycolysis; D-glyceraldehyde 3-phosphate and glycerone phosphate from D-glucose: step 2/4. Its function is as follows. Catalyzes the reversible isomerization of glucose-6-phosphate to fructose-6-phosphate. The polypeptide is Glucose-6-phosphate isomerase 2 (Chromobacterium violaceum (strain ATCC 12472 / DSM 30191 / JCM 1249 / CCUG 213 / NBRC 12614 / NCIMB 9131 / NCTC 9757 / MK)).